The chain runs to 248 residues: 3-deoxy-manno-octulosonate cytidylyltransferase (248 aa).

This sequence belongs to the KdsB family.

It is found in the cytoplasm. It catalyses the reaction 3-deoxy-alpha-D-manno-oct-2-ulosonate + CTP = CMP-3-deoxy-beta-D-manno-octulosonate + diphosphate. The protein operates within nucleotide-sugar biosynthesis; CMP-3-deoxy-D-manno-octulosonate biosynthesis; CMP-3-deoxy-D-manno-octulosonate from 3-deoxy-D-manno-octulosonate and CTP: step 1/1. Its pathway is bacterial outer membrane biogenesis; lipopolysaccharide biosynthesis. Its function is as follows. Activates KDO (a required 8-carbon sugar) for incorporation into bacterial lipopolysaccharide in Gram-negative bacteria. This is 3-deoxy-manno-octulosonate cytidylyltransferase from Escherichia fergusonii (strain ATCC 35469 / DSM 13698 / CCUG 18766 / IAM 14443 / JCM 21226 / LMG 7866 / NBRC 102419 / NCTC 12128 / CDC 0568-73).